A 606-amino-acid chain; its full sequence is Pentatricopeptide repeat-containing protein At1g31920 (606 aa).

PPR repeat units follow at residues 96 to 130 (CTFD…GNEP), 131 to 165 (DNFT…GLEA), 166 to 200 (DVFV…TAAS), 201 to 227 (WSSM…MCSE), 233 to 263 (EESG…LLRN), 268 to 298 (NIIV…MEKR), 299 to 333 (NNLT…GLEP), 334 to 368 (DHVV…GKVE), and 370 to 404 (TAEH…KNDV). Residues 405-480 (IWRTFLSQCR…TPGFSIVELK (76 aa)) form a type E motif region. A type E(+) motif region spans residues 481–511 (GKTHRFVSQDRSHPKCKEIYKMLHQMEWQLK). A type DYW motif region spans residues 512-606 (FEGYSPDLTQ…GGTCSCKDYW (95 aa)).

The protein belongs to the PPR family. PCMP-H subfamily.

This Arabidopsis thaliana (Mouse-ear cress) protein is Pentatricopeptide repeat-containing protein At1g31920 (PCMP-H11).